We begin with the raw amino-acid sequence, 513 residues long: GMP synthase [glutamine-hydrolyzing] (513 aa).

The region spanning 3 to 200 (SVLVLDFGSQ…LLNIAGITPD (198 aa)) is the Glutamine amidotransferase type-1 domain. C80 serves as the catalytic Nucleophile. Active-site residues include H174 and E176. One can recognise a GMPS ATP-PPase domain in the interval 201–388 (WSSKSFIDHQ…LGIAEDILMR (188 aa)). 228–234 (SGGVDST) is a binding site for ATP.

Homodimer.

It catalyses the reaction XMP + L-glutamine + ATP + H2O = GMP + L-glutamate + AMP + diphosphate + 2 H(+). The protein operates within purine metabolism; GMP biosynthesis; GMP from XMP (L-Gln route): step 1/1. In terms of biological role, catalyzes the synthesis of GMP from XMP. This is GMP synthase [glutamine-hydrolyzing] from Chlorobium phaeovibrioides (strain DSM 265 / 1930) (Prosthecochloris vibrioformis (strain DSM 265)).